The following is a 535-amino-acid chain: RAN GTPase-activating protein 1 (535 aa).

The interval 1 to 115 (MDHSAKTTQN…EESEVEVSKD (115 aa)) is WPP. LRR repeat units follow at residues 208 to 231 (GSKLRYLNLSDNALGEKGIRAFAS), 236 to 259 (QHDLEELYLMNDGISEDAARAVRE), 264 to 287 (TDKIRVLQFHNNMTGDEGATAIAE), 320 to 343 (CSHLKKLDLRDNMFGVEGGIALAK), 353 to 376 (EIYMSYLNLEDEGTEALSEALLKS), 377 to 400 (APSLEVLELAGNDITVKSTGNLAA), 405 to 428 (KQSLAKLNLSENELKDEGTILIAK), 433 to 456 (HDQLVEVDLSTNMIRRAGARALAQ), and 461 to 488 (KNTFKLLNINGNFISEEGIDEVNDMFKD). Residues 493 to 535 (LVPLDDNDPEGEDFEDEDEEEEGEDGNELESKLGSLKIKQGEE) form a disordered region. Residues 497-520 (DDNDPEGEDFEDEDEEEEGEDGNE) are compositionally biased toward acidic residues.

The protein belongs to the RNA1 family. As to quaternary structure, homodimer. Interacts with WIP1 through its WPP domain. Component of Ran complexes at least composed of WIT1 or WIT2, RANGAP1 or RANGAP2, and WIP1 or WIP2 or WIP3. Interacts directly with WIT1, WIP2 and WIP3. Interacts with POK1.

It is found in the cytoplasm. Its subcellular location is the nucleus envelope. It localises to the nucleus membrane. The protein localises to the cytoskeleton. The protein resides in the spindle. It is found in the phragmoplast. Its function is as follows. GTPase activator for the nuclear Ras-related regulatory protein Ran, converting it to the putatively inactive GDP-bound state. Plays a role in spatial signaling during cell division. The chain is RAN GTPase-activating protein 1 (RANGAP1) from Arabidopsis thaliana (Mouse-ear cress).